A 370-amino-acid chain; its full sequence is 3-isopropylmalate dehydrogenase (370 aa).

77-90 (GPKWDSVPYEVRPE) contributes to the NAD(+) binding site. Substrate is bound by residues Arg97, Arg107, Arg135, and Asp226. 3 residues coordinate Mg(2+): Asp226, Asp250, and Asp254. An NAD(+)-binding site is contributed by 290-302 (GSAPDIAGKGIAN).

This sequence belongs to the isocitrate and isopropylmalate dehydrogenases family. LeuB type 1 subfamily. Homodimer. The cofactor is Mg(2+). Mn(2+) is required as a cofactor.

It is found in the cytoplasm. It carries out the reaction (2R,3S)-3-isopropylmalate + NAD(+) = 4-methyl-2-oxopentanoate + CO2 + NADH. Its pathway is amino-acid biosynthesis; L-leucine biosynthesis; L-leucine from 3-methyl-2-oxobutanoate: step 3/4. Catalyzes the oxidation of 3-carboxy-2-hydroxy-4-methylpentanoate (3-isopropylmalate) to 3-carboxy-4-methyl-2-oxopentanoate. The product decarboxylates to 4-methyl-2 oxopentanoate. The polypeptide is 3-isopropylmalate dehydrogenase (Brucella melitensis biotype 1 (strain ATCC 23456 / CCUG 17765 / NCTC 10094 / 16M)).